A 92-amino-acid chain; its full sequence is Muconolactone Delta-isomerase (92 aa).

It belongs to the muconolactone Delta-isomerase family. In terms of assembly, homodecamer.

It carries out the reaction (S)-muconolactone = (4,5-dihydro-5-oxofuran-2-yl)-acetate. It participates in aromatic compound metabolism; beta-ketoadipate pathway; 5-oxo-4,5-dihydro-2-furylacetate from catechol: step 3/3. The polypeptide is Muconolactone Delta-isomerase (catC) (Cupriavidus pinatubonensis (strain JMP 134 / LMG 1197) (Cupriavidus necator (strain JMP 134))).